Consider the following 132-residue polypeptide: Profilin-1 (132 aa).

This sequence belongs to the profilin family. Occurs in many kinds of cells as a complex with monomeric actin in a 1:1 ratio.

It localises to the cytoplasm. It is found in the cytoskeleton. Binds to actin and affects the structure of the cytoskeleton. At high concentrations, profilin prevents the polymerization of actin, whereas it enhances it at low concentrations. By binding to PIP2, it inhibits the formation of IP3 and DG. In Parietaria judaica (Pellitory-of-the-wall), this protein is Profilin-1 (PRO1).